The chain runs to 525 residues: GMP synthase [glutamine-hydrolyzing] (525 aa).

One can recognise a Glutamine amidotransferase type-1 domain in the interval 9 to 207 (RILILDFGSQ…ILDICGCEAL (199 aa)). The active-site Nucleophile is the C86. Residues H181 and E183 contribute to the active site. The 193-residue stretch at 208-400 (WTPSKIAEDA…LGLPYDMVYR (193 aa)) folds into the GMPS ATP-PPase domain. ATP is bound at residue 235–241 (SGGVDSS).

In terms of assembly, homodimer.

It carries out the reaction XMP + L-glutamine + ATP + H2O = GMP + L-glutamate + AMP + diphosphate + 2 H(+). It functions in the pathway purine metabolism; GMP biosynthesis; GMP from XMP (L-Gln route): step 1/1. Functionally, catalyzes the synthesis of GMP from XMP. In Pseudomonas savastanoi pv. phaseolicola (strain 1448A / Race 6) (Pseudomonas syringae pv. phaseolicola (strain 1448A / Race 6)), this protein is GMP synthase [glutamine-hydrolyzing].